The sequence spans 31 residues: Photosystem II reaction center protein T (31 aa).

Residues 3–23 traverse the membrane as a helical segment; the sequence is ALVYTFLLVGTLGIIFFAIFF.

It belongs to the PsbT family. As to quaternary structure, PSII is composed of 1 copy each of membrane proteins PsbA, PsbB, PsbC, PsbD, PsbE, PsbF, PsbH, PsbI, PsbJ, PsbK, PsbL, PsbM, PsbT, PsbY, PsbZ, Psb30/Ycf12, at least 3 peripheral proteins of the oxygen-evolving complex and a large number of cofactors. It forms dimeric complexes.

The protein localises to the plastid. The protein resides in the chloroplast thylakoid membrane. Found at the monomer-monomer interface of the photosystem II (PS II) dimer, plays a role in assembly and dimerization of PSII. PSII is a light-driven water plastoquinone oxidoreductase, using light energy to abstract electrons from H(2)O, generating a proton gradient subsequently used for ATP formation. The polypeptide is Photosystem II reaction center protein T (Chlorella vulgaris (Green alga)).